A 722-amino-acid chain; its full sequence is Inactive serine protease PAMR1 (722 aa).

Positions 1 to 21 (MALLVWSSLVVASLHLLGTAA) are cleaved as a signal peptide. The N-linked (GlcNAc...) asparagine glycan is linked to Asn-98. Cystine bridges form between Cys-130/Cys-152, Cys-179/Cys-201, Cys-241/Cys-252, Cys-246/Cys-262, Cys-264/Cys-273, Cys-282/Cys-331, Cys-317/Cys-344, and Cys-416/Cys-444. Residues 130 to 238 (CGEVIQAARG…DGFYVTFEEV (109 aa)) form the CUB domain. Residues 237–274 (EVTGCSSTPCFHDGTCIADKTGSYRCACLAGYTGRHCE) enclose the EGF-like domain. Sushi domains are found at residues 280-346 (KSCK…VCIK) and 393-446 (KPAL…SCIP). N-linked (GlcNAc...) asparagine glycosylation occurs at Asn-318. In terms of domain architecture, Peptidase S1 spans 447 to 722 (ICGKLENFNI…FKEWLEKNMK (276 aa)). Asn-455 is a glycosylation site (N-linked (GlcNAc...) asparagine). Cys-491 and Cys-507 form a disulfide bridge. N-linked (GlcNAc...) asparagine glycosylation occurs at Asn-616. Cystine bridges form between Cys-632–Cys-651 and Cys-663–Cys-699.

This sequence belongs to the peptidase S1 family.

The protein resides in the secreted. Its function is as follows. May play a role in regeneration of skeletal muscle. This is Inactive serine protease PAMR1 (pamr1) from Xenopus tropicalis (Western clawed frog).